A 438-amino-acid chain; its full sequence is Ribosomal protein uS12 methylthiotransferase RimO (438 aa).

Positions 1-116 (MNVGFISLGC…IWKEIENLLD (116 aa)) constitute an MTTase N-terminal domain. The [4Fe-4S] cluster site is built by Cys10, Cys46, Cys79, Cys147, Cys151, and Cys154. A Radical SAM core domain is found at 133 to 363 (TTGSNMAYLK…MALQEKISRE (231 aa)). In terms of domain architecture, TRAM spans 366–435 (EQKVGNVYKV…DYDLFGELYT (70 aa)).

The protein belongs to the methylthiotransferase family. RimO subfamily. The cofactor is [4Fe-4S] cluster.

It is found in the cytoplasm. It catalyses the reaction L-aspartate(89)-[ribosomal protein uS12]-hydrogen + (sulfur carrier)-SH + AH2 + 2 S-adenosyl-L-methionine = 3-methylsulfanyl-L-aspartate(89)-[ribosomal protein uS12]-hydrogen + (sulfur carrier)-H + 5'-deoxyadenosine + L-methionine + A + S-adenosyl-L-homocysteine + 2 H(+). In terms of biological role, catalyzes the methylthiolation of an aspartic acid residue of ribosomal protein uS12. This Alkaliphilus oremlandii (strain OhILAs) (Clostridium oremlandii (strain OhILAs)) protein is Ribosomal protein uS12 methylthiotransferase RimO.